A 286-amino-acid polypeptide reads, in one-letter code: Nucleotide-binding protein HCH_05324 (286 aa).

8 to 15 (GRSGSGKS) is an ATP binding site. 60–63 (DARN) serves as a coordination point for GTP.

This sequence belongs to the RapZ-like family.

Functionally, displays ATPase and GTPase activities. This chain is Nucleotide-binding protein HCH_05324, found in Hahella chejuensis (strain KCTC 2396).